The primary structure comprises 336 residues: Fructose-1,6-bisphosphatase class 1 (336 aa).

Residues glutamate 92, aspartate 115, leucine 117, and aspartate 118 each coordinate Mg(2+). Substrate is bound by residues 118–121 (DGSS), asparagine 211, tyrosine 244, 262–264 (YLY), and lysine 274. Glutamate 280 contributes to the Mg(2+) binding site.

The protein belongs to the FBPase class 1 family. Homotetramer. Mg(2+) serves as cofactor.

It is found in the cytoplasm. The catalysed reaction is beta-D-fructose 1,6-bisphosphate + H2O = beta-D-fructose 6-phosphate + phosphate. It participates in carbohydrate biosynthesis; gluconeogenesis. The polypeptide is Fructose-1,6-bisphosphatase class 1 (Aliivibrio fischeri (strain ATCC 700601 / ES114) (Vibrio fischeri)).